The primary structure comprises 98 residues: MTADAPVISGSSVVKLARGVRLHEDPVRGQTVLLAPERAMAVDDIAVAIVQALDGERNLDRIAADFAEKFDAPVEEIAEDVRTFVQELSVRRMLEIVQ.

Belongs to the PqqD family. Monomer. Interacts with PqqE.

It participates in cofactor biosynthesis; pyrroloquinoline quinone biosynthesis. In terms of biological role, functions as a PqqA binding protein and presents PqqA to PqqE, in the pyrroloquinoline quinone (PQQ) biosynthetic pathway. This Rhizobium meliloti (strain 1021) (Ensifer meliloti) protein is PqqA binding protein.